The primary structure comprises 479 residues: Ribosomal RNA small subunit methyltransferase F (479 aa).

S-adenosyl-L-methionine-binding positions include 125 to 131 (AAAPGSK), Glu149, Asp176, and Asp194. Cys247 functions as the Nucleophile in the catalytic mechanism.

This sequence belongs to the class I-like SAM-binding methyltransferase superfamily. RsmB/NOP family.

The protein localises to the cytoplasm. It catalyses the reaction cytidine(1407) in 16S rRNA + S-adenosyl-L-methionine = 5-methylcytidine(1407) in 16S rRNA + S-adenosyl-L-homocysteine + H(+). Its function is as follows. Specifically methylates the cytosine at position 1407 (m5C1407) of 16S rRNA. This Escherichia coli O17:K52:H18 (strain UMN026 / ExPEC) protein is Ribosomal RNA small subunit methyltransferase F.